The chain runs to 371 residues: Ribosomal RNA small subunit methyltransferase H (371 aa).

S-adenosyl-L-methionine contacts are provided by residues 43–45, Asp62, Leu96, Asp110, and Gln117; that span reads GGH. Residues 315-371 are disordered; the sequence is AAERLDPTQQQRQRTDRERYRRQVRAMHQPGTGSAVRRPVSGDDGTGTDEEGEGHDD. Over residues 360–371 the composition is skewed to acidic residues; that stretch reads TGTDEEGEGHDD.

This sequence belongs to the methyltransferase superfamily. RsmH family.

The protein localises to the cytoplasm. The catalysed reaction is cytidine(1402) in 16S rRNA + S-adenosyl-L-methionine = N(4)-methylcytidine(1402) in 16S rRNA + S-adenosyl-L-homocysteine + H(+). Specifically methylates the N4 position of cytidine in position 1402 (C1402) of 16S rRNA. The sequence is that of Ribosomal RNA small subunit methyltransferase H from Salinispora tropica (strain ATCC BAA-916 / DSM 44818 / JCM 13857 / NBRC 105044 / CNB-440).